The sequence spans 792 residues: G-type lectin S-receptor-like serine/threonine-protein kinase At1g61440 (792 aa).

The signal sequence occupies residues 1–17; the sequence is MGKKRIVLLLFISFSYA. The Bulb-type lectin domain occupies 18-137; it reads EITKESPLSI…VTGRTLWESF (120 aa). The Extracellular segment spans residues 18–419; that stretch reads EITKESPLSI…ELDVHKRKMT (402 aa). N-linked (GlcNAc...) asparagine glycosylation is found at Asn-46, Asn-127, and Asn-229. The 37-residue stretch at 271–307 folds into the EGF-like; atypical domain; it reads PANSCDIYGVCGPFGFCVISDPPKCKCFKGFVPKSIE. 2 disulfide bridges follow: Cys-275–Cys-287 and Cys-281–Cys-295. N-linked (GlcNAc...) asparagine glycans are attached at residues Asn-313, Asn-329, and Asn-368. The PAN domain maps to 326–408; the sequence is CQGNSTGKDA…GEILSIRLAH (83 aa). 2 disulfides stabilise this stretch: Cys-361–Cys-382 and Cys-365–Cys-371. A helical transmembrane segment spans residues 420-440; sequence IVASTVSLTLFVILGFATFGF. Residues 441-792 are Cytoplasmic-facing; that stretch reads WRNRVKHHDA…EMTESVILGR (352 aa). The Protein kinase domain maps to 478–763; the sequence is FSLSNKLGHG…DLPLPKQPTF (286 aa). ATP-binding positions include 484 to 492 and Lys-506; that span reads LGHGGFGSV. A phosphoserine mark is found at Ser-512 and Ser-527. The caM-binding stretch occupies residues 567 to 584; that stretch reads RKRLELDWPKRFDIIQGI. Asp-603 acts as the Proton acceptor in catalysis. Phosphoserine occurs at positions 607 and 620. Residue Thr-637 is modified to Phosphothreonine. Phosphoserine is present on residues Ser-680 and Ser-774.

This sequence belongs to the protein kinase superfamily. Ser/Thr protein kinase family.

It localises to the cell membrane. The catalysed reaction is L-seryl-[protein] + ATP = O-phospho-L-seryl-[protein] + ADP + H(+). It carries out the reaction L-threonyl-[protein] + ATP = O-phospho-L-threonyl-[protein] + ADP + H(+). The chain is G-type lectin S-receptor-like serine/threonine-protein kinase At1g61440 from Arabidopsis thaliana (Mouse-ear cress).